The sequence spans 442 residues: UDP-N-acetylmuramoylalanine--D-glutamate ligase (442 aa).

113 to 119 (GSNGKTT) provides a ligand contact to ATP.

The protein belongs to the MurCDEF family.

The protein resides in the cytoplasm. It catalyses the reaction UDP-N-acetyl-alpha-D-muramoyl-L-alanine + D-glutamate + ATP = UDP-N-acetyl-alpha-D-muramoyl-L-alanyl-D-glutamate + ADP + phosphate + H(+). It participates in cell wall biogenesis; peptidoglycan biosynthesis. Its function is as follows. Cell wall formation. Catalyzes the addition of glutamate to the nucleotide precursor UDP-N-acetylmuramoyl-L-alanine (UMA). This Coxiella burnetii (strain CbuK_Q154) (Coxiella burnetii (strain Q154)) protein is UDP-N-acetylmuramoylalanine--D-glutamate ligase.